Consider the following 177-residue polypeptide: Large ribosomal subunit protein uL6 (177 aa).

Belongs to the universal ribosomal protein uL6 family. As to quaternary structure, part of the 50S ribosomal subunit.

This protein binds to the 23S rRNA, and is important in its secondary structure. It is located near the subunit interface in the base of the L7/L12 stalk, and near the tRNA binding site of the peptidyltransferase center. The chain is Large ribosomal subunit protein uL6 from Yersinia enterocolitica serotype O:8 / biotype 1B (strain NCTC 13174 / 8081).